Consider the following 487-residue polypeptide: Aspartyl/glutamyl-tRNA(Asn/Gln) amidotransferase subunit B (487 aa).

The protein belongs to the GatB/GatE family. GatB subfamily. As to quaternary structure, heterotrimer of A, B and C subunits.

The enzyme catalyses L-glutamyl-tRNA(Gln) + L-glutamine + ATP + H2O = L-glutaminyl-tRNA(Gln) + L-glutamate + ADP + phosphate + H(+). The catalysed reaction is L-aspartyl-tRNA(Asn) + L-glutamine + ATP + H2O = L-asparaginyl-tRNA(Asn) + L-glutamate + ADP + phosphate + 2 H(+). Allows the formation of correctly charged Asn-tRNA(Asn) or Gln-tRNA(Gln) through the transamidation of misacylated Asp-tRNA(Asn) or Glu-tRNA(Gln) in organisms which lack either or both of asparaginyl-tRNA or glutaminyl-tRNA synthetases. The reaction takes place in the presence of glutamine and ATP through an activated phospho-Asp-tRNA(Asn) or phospho-Glu-tRNA(Gln). The protein is Aspartyl/glutamyl-tRNA(Asn/Gln) amidotransferase subunit B of Roseiflexus sp. (strain RS-1).